The following is a 66-amino-acid chain: Large ribosomal subunit protein uL29 (66 aa).

It belongs to the universal ribosomal protein uL29 family.

The polypeptide is Large ribosomal subunit protein uL29 (Thermococcus onnurineus (strain NA1)).